The chain runs to 601 residues: Sulfite reductase [NADPH] flavoprotein alpha-component (601 aa).

A Flavodoxin-like domain is found at 64–202 (ITLISASQTG…SAQQWRQQIV (139 aa)). FMN contacts are provided by residues 70-75 (SQTGNA), 117-120 (STQG), and 153-162 (LGDTSYEHFC). In terms of domain architecture, FAD-binding FR-type spans 236–450 (AAPLTAQLSV…IEHNDNFRLP (215 aa)). FAD-binding positions include Thr324, Lys358, 388–391 (RLYS), 406–408 (TVG), Tyr412, and 421–424 (GGAS). NADP(+) is bound by residues 521 to 522 (SR), 527 to 531 (KIYVQ), and Asp563. Position 601 (Tyr601) interacts with FAD.

Belongs to the NADPH-dependent sulphite reductase flavoprotein subunit CysJ family. It in the N-terminal section; belongs to the flavodoxin family. The protein in the C-terminal section; belongs to the flavoprotein pyridine nucleotide cytochrome reductase family. As to quaternary structure, alpha(8)-beta(8). The alpha component is a flavoprotein, the beta component is a hemoprotein. FAD is required as a cofactor. The cofactor is FMN.

It carries out the reaction hydrogen sulfide + 3 NADP(+) + 3 H2O = sulfite + 3 NADPH + 4 H(+). The protein operates within sulfur metabolism; hydrogen sulfide biosynthesis; hydrogen sulfide from sulfite (NADPH route): step 1/1. Component of the sulfite reductase complex that catalyzes the 6-electron reduction of sulfite to sulfide. This is one of several activities required for the biosynthesis of L-cysteine from sulfate. The flavoprotein component catalyzes the electron flow from NADPH -&gt; FAD -&gt; FMN to the hemoprotein component. In Yersinia enterocolitica serotype O:8 / biotype 1B (strain NCTC 13174 / 8081), this protein is Sulfite reductase [NADPH] flavoprotein alpha-component.